The sequence spans 116 residues: UPF0127 protein PF1050 (116 aa).

This sequence belongs to the UPF0127 family.

The polypeptide is UPF0127 protein PF1050 (Pyrococcus furiosus (strain ATCC 43587 / DSM 3638 / JCM 8422 / Vc1)).